A 131-amino-acid chain; its full sequence is Aspartate 1-decarboxylase (131 aa).

The active-site Schiff-base intermediate with substrate; via pyruvic acid is Ser25. A Pyruvic acid (Ser) modification is found at Ser25. Thr57 is a binding site for substrate. The active-site Proton donor is the Tyr58. Substrate is bound at residue 73-75 (GAA).

The protein belongs to the PanD family. Heterooctamer of four alpha and four beta subunits. Pyruvate is required as a cofactor. In terms of processing, is synthesized initially as an inactive proenzyme, which is activated by self-cleavage at a specific serine bond to produce a beta-subunit with a hydroxyl group at its C-terminus and an alpha-subunit with a pyruvoyl group at its N-terminus.

Its subcellular location is the cytoplasm. It catalyses the reaction L-aspartate + H(+) = beta-alanine + CO2. The protein operates within cofactor biosynthesis; (R)-pantothenate biosynthesis; beta-alanine from L-aspartate: step 1/1. Catalyzes the pyruvoyl-dependent decarboxylation of aspartate to produce beta-alanine. The polypeptide is Aspartate 1-decarboxylase (Anaeromyxobacter sp. (strain Fw109-5)).